The primary structure comprises 102 residues: Carboxysome shell protein CcmK2 (102 aa).

In terms of domain architecture, BMC spans 4–90 (AVGMIETLGF…PHENLEYVLP (87 aa)).

It belongs to the bacterial microcompartments protein family. CcmK subfamily. As to quaternary structure, homohexamer. Interacts with CcmO in the carboxysome. Interacts with CcmN.

Its subcellular location is the carboxysome. Its function is as follows. One of the shell proteins of the carboxysome, a polyhedral inclusion where RuBisCO (ribulose bisphosphate carboxylase, rbcL-rbcS) is sequestered. Assembles into hexamers which make sheets that form the facets of the polyhedral carboxysome. The hexamer central pore probably regulates metabolite flux. The major shell protein of the carboxysome, a polyhedral inclusion where RuBisCO (ribulose bisphosphate carboxylase, rbcL-rbcS) is sequestered. Hexamers make sheets that form the facets of the polyhedral carboxysome. The shell is 4.5 nm thick, as observed for CcmK hexamers. Required for recruitment of CcmO to the pre-carboxysome. In PCC 7942 there are several CcmK paralogs with presumably functional differences; replacing the central pore residues (34-37) with those of either CcmK4 from this organism (Tyr-Met-Arg-Ala) or from an alpha-type carboxysome forming cyanobacterium (CsoS1 of P.marinus strain MIT 9313, Arg-Glu-Phe-Val) allows the bacterium to make carboxysomes, but the expression level is too low to know if the carboxysome is functional for CO(2) fixation. Functionally, beta-carboxysome assembly initiates when soluble RuBisCO is condensed into a liquid matrix in a pre-carboxysome by the RbcS-like domains of probably both CcmM58 and CcmM35. CcmN interacts with the N-terminus of CcmM58, and then recruits the CcmK2 major shell protein via CcmN's encapsulation peptide. Shell formation requires CcmK proteins and CcmO. CcmL caps the otherwise elongated carboxysome. Once fully encapsulated carboxysomes are formed, they migrate within the cell probably via interactions with the cytoskeleton. The chain is Carboxysome shell protein CcmK2 from Synechococcus elongatus (strain ATCC 33912 / PCC 7942 / FACHB-805) (Anacystis nidulans R2).